Consider the following 71-residue polypeptide: MPIVKVRENEPFDVALRRFKRSCEKAGILADVRAREFYEKPTTARKRAKAAAVKRLAKKLSRENARRVRLY.

This sequence belongs to the bacterial ribosomal protein bS21 family.

The sequence is that of Small ribosomal subunit protein bS21 from Shewanella amazonensis (strain ATCC BAA-1098 / SB2B).